The primary structure comprises 227 residues: Transmembrane emp24 domain-containing protein 1 (227 aa).

Residues 1 to 24 (MMAAGAAVALALWLLLPAVGVGEA) form the signal peptide. The Extracellular segment spans residues 25–194 (GPPPIQDGEF…LQEDNLERVN (170 aa)). Positions 43–125 (KQCFYQSAPA…EKLVFFELIF (83 aa)) constitute a GOLD domain. Positions 145–170 (EMLDVKMEDIKESIETMRTRLERSIQ) form a coiled coil. Residues 195 to 215 (FWSAANVAVLLLVAVLQVCTL) traverse the membrane as a helical segment. Over 216 to 227 (KRFFHDKRPVPT) the chain is Cytoplasmic. A COPII vesicle coat-binding motif is present at residues 218 to 219 (FF). The short motif at 218–227 (FFHDKRPVPT) is the COPI vesicle coat-binding element.

This sequence belongs to the EMP24/GP25L family. As to quaternary structure, homodimer in endoplasmic reticulum, endoplasmic reticulum-Golgi intermediate compartment and cis-Golgi network. Interacts with IL1RL1. Interacts with RNF26; this interaction is important to modulate innate immune signaling through the cGAS-STING pathway. Widely expressed.

Its subcellular location is the cell membrane. It localises to the endoplasmic reticulum membrane. It is found in the golgi apparatus. The protein localises to the cis-Golgi network membrane. The protein resides in the endoplasmic reticulum-Golgi intermediate compartment membrane. Its function is as follows. Potential role in vesicular protein trafficking, mainly in the early secretory pathway. May act as a cargo receptor at the lumenal side for incorporation of secretory cargo molecules into transport vesicles and may be involved in vesicle coat formation at the cytoplasmic side. Plays a positive role in IL-33-mediated IL-8 and IL-6 production by interacting with interleukin-33 receptor IL1RL1. Plays also a role in the modulation of innate immune signaling through the cGAS-STING pathway by interacting with RNF26. In Mus musculus (Mouse), this protein is Transmembrane emp24 domain-containing protein 1 (Tmed1).